The following is a 68-amino-acid chain: UPF0253 protein VFMJ11_0680 (68 aa).

Belongs to the UPF0253 family.

This Aliivibrio fischeri (strain MJ11) (Vibrio fischeri) protein is UPF0253 protein VFMJ11_0680.